We begin with the raw amino-acid sequence, 455 residues long: Chromosomal replication initiator protein DnaA (455 aa).

The domain I, interacts with DnaA modulators stretch occupies residues 1 to 70; that stretch reads MTNETWVQVR…RMRLTEAGSP (70 aa). The domain II stretch occupies residues 70 to 113; that stretch reads PVERLEFAVSNTPRAPLKEVKAAAPAASPARARPAPPEEDLRGA. Residues 87–109 form a disordered region; it reads KEVKAAAPAASPARARPAPPEED. The segment covering 91–102 has biased composition (low complexity); sequence AAAPAASPARAR. A domain III, AAA+ region region spans residues 114–335; the sequence is PLDARFTFDS…GALTRLFAFA (222 aa). ATP contacts are provided by Gly-158, Gly-160, Lys-161, and Thr-162. The domain IV, binds dsDNA stretch occupies residues 336-455; sequence SLVGREITLD…LQLLRRLLQA (120 aa).

It belongs to the DnaA family. Oligomerizes as a right-handed, spiral filament on DNA at oriC.

The protein resides in the cytoplasm. In terms of biological role, plays an essential role in the initiation and regulation of chromosomal replication. ATP-DnaA binds to the origin of replication (oriC) to initiate formation of the DNA replication initiation complex once per cell cycle. Binds the DnaA box (a 9 base pair repeat at the origin) and separates the double-stranded (ds)DNA. Forms a right-handed helical filament on oriC DNA; dsDNA binds to the exterior of the filament while single-stranded (ss)DNA is stabiized in the filament's interior. The ATP-DnaA-oriC complex binds and stabilizes one strand of the AT-rich DNA unwinding element (DUE), permitting loading of DNA polymerase. After initiation quickly degrades to an ADP-DnaA complex that is not apt for DNA replication. Binds acidic phospholipids. This is Chromosomal replication initiator protein DnaA from Cereibacter sphaeroides (strain ATCC 17029 / ATH 2.4.9) (Rhodobacter sphaeroides).